A 347-amino-acid chain; its full sequence is GMP reductase (347 aa).

Ala108 to Ala131 is a binding site for NADP(+). Residues Gly181 and Gly183 each contribute to the K(+) site. Residue Cys186 is the Thioimidate intermediate of the active site. Ile216 to Val239 lines the NADP(+) pocket.

It belongs to the IMPDH/GMPR family. GuaC type 1 subfamily. Homotetramer.

It catalyses the reaction IMP + NH4(+) + NADP(+) = GMP + NADPH + 2 H(+). In terms of biological role, catalyzes the irreversible NADPH-dependent deamination of GMP to IMP. It functions in the conversion of nucleobase, nucleoside and nucleotide derivatives of G to A nucleotides, and in maintaining the intracellular balance of A and G nucleotides. The chain is GMP reductase from Salmonella paratyphi B (strain ATCC BAA-1250 / SPB7).